The sequence spans 790 residues: Valine--tRNA ligase (790 aa).

A 'HIGH' region motif is present at residues 40 to 50 (PTVSGKMHMGH). The short motif at 521 to 525 (KMSKS) is the 'KMSKS' region element. Lys524 contributes to the ATP binding site.

This sequence belongs to the class-I aminoacyl-tRNA synthetase family. ValS type 2 subfamily.

It localises to the cytoplasm. The catalysed reaction is tRNA(Val) + L-valine + ATP = L-valyl-tRNA(Val) + AMP + diphosphate. Catalyzes the attachment of valine to tRNA(Val). As ValRS can inadvertently accommodate and process structurally similar amino acids such as threonine, to avoid such errors, it has a 'posttransfer' editing activity that hydrolyzes mischarged Thr-tRNA(Val) in a tRNA-dependent manner. This chain is Valine--tRNA ligase, found in Thermoplasma volcanium (strain ATCC 51530 / DSM 4299 / JCM 9571 / NBRC 15438 / GSS1).